We begin with the raw amino-acid sequence, 130 residues long: kinetoplast-associated protein 2-2 (130 aa).

Positions 1-10 are excised as a propeptide; sequence MLRRTVSNFA. The tract at residues 95 to 130 is disordered; that stretch reads ETKQAQRAKAQKAQKKPKSAKSKVKKAAKKAKKSKK. Basic residues predominate over residues 103–130; sequence KAQKAQKKPKSAKSKVKKAAKKAKKSKK.

This sequence belongs to the KAP family. Associates with the kinetoplast DNA network.

The protein resides in the mitochondrion matrix. Its subcellular location is the kinetoplast. Histone H1-like DNA-binding protein involved in the organization and segregation of kinetoplast DNA (kDNA). The mitochondrial DNA of kinetoplastid protozoa consists of about 5,000 minicircles and 20 to 30 maxicircles. These circular DNAs are held together by catenation into a highly organized compact disk structure referred to as a kinetoplast DNA (kDNA) network. Binds preferentially to a specific fragment of minicircle DNA and is able to compact kDNA networks through DNA charge neutralization and condensation. The polypeptide is kinetoplast-associated protein 2-2 (KAP2-2) (Crithidia fasciculata).